The following is a 630-amino-acid chain: 1-deoxy-D-xylulose-5-phosphate synthase (630 aa).

Thiamine diphosphate-binding positions include histidine 75 and 116-118 (GHS). Aspartate 147 provides a ligand contact to Mg(2+). Residues 148–149 (GA), asparagine 176, tyrosine 287, and glutamate 367 contribute to the thiamine diphosphate site. A Mg(2+)-binding site is contributed by asparagine 176.

This sequence belongs to the transketolase family. DXPS subfamily. In terms of assembly, homodimer. Mg(2+) is required as a cofactor. It depends on thiamine diphosphate as a cofactor.

The catalysed reaction is D-glyceraldehyde 3-phosphate + pyruvate + H(+) = 1-deoxy-D-xylulose 5-phosphate + CO2. Its pathway is metabolic intermediate biosynthesis; 1-deoxy-D-xylulose 5-phosphate biosynthesis; 1-deoxy-D-xylulose 5-phosphate from D-glyceraldehyde 3-phosphate and pyruvate: step 1/1. In terms of biological role, catalyzes the acyloin condensation reaction between C atoms 2 and 3 of pyruvate and glyceraldehyde 3-phosphate to yield 1-deoxy-D-xylulose-5-phosphate (DXP). The protein is 1-deoxy-D-xylulose-5-phosphate synthase of Treponema pallidum (strain Nichols).